The sequence spans 149 residues: Large ribosomal subunit protein bL9 (149 aa).

Belongs to the bacterial ribosomal protein bL9 family.

Functionally, binds to the 23S rRNA. This is Large ribosomal subunit protein bL9 from Aliivibrio fischeri (strain ATCC 700601 / ES114) (Vibrio fischeri).